Here is a 375-residue protein sequence, read N- to C-terminus: Protein RIC-3 (375 aa).

A signal peptide spans 1–29 (MALSAVQKVVLFSCLVLCVSLLLPRAYIA). Over 30-90 (RGKPAAQEGN…GGGGGTRPSL (61 aa)) the chain is Lumenal. Residues 38–47 (GNTGLFQSSG) are compositionally biased toward polar residues. The tract at residues 38–63 (GNTGLFQSSGHHPKPTDGRPGGAHFP) is disordered. Residues 91–111 (VGQIIPIYGFGILLYILYILF) traverse the membrane as a helical segment. Residues 112–375 (KLSSKGKSTK…RKRNTKGIEY (264 aa)) are Cytoplasmic-facing. Positions 135–165 (KRKITDYELSQLQDKLKETEEAMEKIISRLG) form a coiled coil. The disordered stretch occupies residues 251–375 (SAEQVAEQMG…RKRNTKGIEY (125 aa)). Residues 286–296 (GDQQAQGTISA) are compositionally biased toward polar residues. Positions 305-319 (EDIEEDEDEDEDPEV) are enriched in acidic residues. Over residues 365 to 375 (LRKRNTKGIEY) the composition is skewed to basic residues.

Belongs to the ric-3 family.

The protein resides in the endoplasmic reticulum membrane. Molecular chaperone which facilitates proper subunit assembly andsurface trafficking of alpha-7 (CHRNA7) and alpha-8 (CHRNA8) nicotinic acetylcholine receptors. May also promote functional expression of homomeric serotoninergic 5-HT3 receptors, and of heteromeric acetylcholine receptors. This is Protein RIC-3 (ric3) from Xenopus tropicalis (Western clawed frog).